The following is a 187-amino-acid chain: Sodium/potassium ATPase inhibitor SPAI-2 (187 aa).

The first 21 residues, 1 to 21 (MRSRSFLVLVAVFLICETLVA), serve as a signal peptide directing secretion. Pyrrolidone carboxylic acid is present on Q22. The propeptide occupies 22–126 (QRLDRIRGPK…NAQLPDKVQD (105 aa)). Residues 28-98 (RGPKGQGQDP…QDPVKAELPD (71 aa)) are disordered. 14 consecutive repeat copies span residues 34–39 (GQDPVE), 40–45 (GQDQDE), 46–51 (GPGPVK), 58–63 (GQDPVK), 64–69 (GQDPVK), 70–75 (GQDPVK), 76–81 (GQDPVK), 82–87 (GQDLVK), 88–93 (SQDPVK), 100–105 (GQDVVK), 106–111 (GHEPVE), 112–117 (GQDPVN), 118–123 (AQLPDK), and 124–129 (VQDPVK). The segment at 34 to 129 (GQDPVEGQDQ…LPDKVQDPVK (96 aa)) is 14 X 6 AA approximate tandem repeats. An SVP-1 clotting 1 repeat occupies 64-85 (GQDPVKGQDPVKGQDPVKGQDL). A WAP domain is found at 139-187 (LLSKRGHCPRILFRCPLSNPSNKCWRDYDCPGVKKCCEGFCGKDCLYPK). 4 cysteine pairs are disulfide-bonded: C146/C175, C153/C179, C162/C174, and C168/C183.

The short form (AA 127-187) may be an artifact due to the strongly acidic conditions of the duodenum. The pro-SPAI form may be the native form. As to expression, small intestine &gt; large intestine. The plasma contains the pro-SPAI form circulating.

Inhibits Na(+),K(+) ATPase by the competitive mode against Na(+). This is Sodium/potassium ATPase inhibitor SPAI-2 from Sus scrofa (Pig).